The chain runs to 512 residues: Nephrocan (512 aa).

Residues 1 to 19 (MHPLWAFLLGLSLTNGLSA) form the signal peptide. One can recognise an LRRNT domain in the interval 20 to 44 (NCPGRCSCDSMQSVQCYRLMELPSG). LRR repeat units lie at residues 45-69 (IPST…NFTG), 71-93 (LALE…TFKT), 94-117 (LSTL…LPAN), 119-138 (EVLK…EFEG), 139-162 (LKNL…MLSP), 164-185 (ASLQ…PLSL), 186-208 (PHLK…VFTS), 210-232 (QNLQ…LPKS), 234-253 (LSLK…DMKH), 254-276 (LENL…AQQL), 277-299 (TNLT…LPSR), 301-320 (QKLD…EFQD), 321-344 (LRDL…ALQR), 346-371 (SQLS…TLAR), 373-389 (DLKG…ELRD), 390-413 (LKQL…ALEG), and 415-442 (PRLR…VLKA). N-linked (GlcNAc...) asparagine glycosylation occurs at asparagine 66. Residues 474 to 484 (EHHLQQSEKSK) are compositionally biased toward basic and acidic residues. A disordered region spans residues 474–512 (EHHLQQSEKSKETKKKPKPEDSSSIRLNMDDDDDDYEID). Positions 503–512 (DDDDDDYEID) are enriched in acidic residues.

This sequence belongs to the small leucine-rich proteoglycan (SLRP) family. N-glycosylated. As to expression, expressed at highest levels in the kidney, where it is primarily detected in the epithelial cells of distal tubules and collecting ducts, and more weakly in proximal epithelial cells. Expressed at lower levels in heart and lung (at protein level). Detected in skeletal muscle.

It localises to the secreted. Functionally, may inhibit TGF-beta signaling. This Mus musculus (Mouse) protein is Nephrocan.